The sequence spans 66 residues: Large ribosomal subunit protein uL29 (66 aa).

Belongs to the universal ribosomal protein uL29 family.

This chain is Large ribosomal subunit protein uL29, found in Borreliella burgdorferi (strain ZS7) (Borrelia burgdorferi).